We begin with the raw amino-acid sequence, 73 residues long: Large ribosomal subunit protein bL31 (73 aa).

Zn(2+) contacts are provided by Cys-16, Cys-18, Cys-36, and Cys-39.

It belongs to the bacterial ribosomal protein bL31 family. Type A subfamily. As to quaternary structure, part of the 50S ribosomal subunit. It depends on Zn(2+) as a cofactor.

Its function is as follows. Binds the 23S rRNA. This is Large ribosomal subunit protein bL31 from Desulfosudis oleivorans (strain DSM 6200 / JCM 39069 / Hxd3) (Desulfococcus oleovorans).